Here is a 550-residue protein sequence, read N- to C-terminus: Glucose-6-phosphate isomerase 2 (550 aa).

Catalysis depends on Glu-359, which acts as the Proton donor. Residues His-390 and Lys-514 contribute to the active site.

It belongs to the GPI family.

The protein resides in the cytoplasm. It carries out the reaction alpha-D-glucose 6-phosphate = beta-D-fructose 6-phosphate. It participates in carbohydrate biosynthesis; gluconeogenesis. Its pathway is carbohydrate degradation; glycolysis; D-glyceraldehyde 3-phosphate and glycerone phosphate from D-glucose: step 2/4. In terms of biological role, catalyzes the reversible isomerization of glucose-6-phosphate to fructose-6-phosphate. This chain is Glucose-6-phosphate isomerase 2, found in Streptomyces avermitilis (strain ATCC 31267 / DSM 46492 / JCM 5070 / NBRC 14893 / NCIMB 12804 / NRRL 8165 / MA-4680).